The chain runs to 775 residues: Polyribonucleotide nucleotidyltransferase (775 aa).

2 residues coordinate Mg(2+): Asp487 and Asp493. The 60-residue stretch at 554-613 folds into the KH domain; that stretch reads PKVEVVDVPEEKAPLIIGPGGSTVKKIYDETGVKVWVGEQGKVYLFVFPGGDVEKAKQMI. S1 motif domains follow at residues 623–693 and 707–775; these read GAVY…IGIE and GDVY…TDDV.

This sequence belongs to the polyribonucleotide nucleotidyltransferase family. Requires Mg(2+) as cofactor.

The protein resides in the cytoplasm. The catalysed reaction is RNA(n+1) + phosphate = RNA(n) + a ribonucleoside 5'-diphosphate. Functionally, involved in mRNA degradation. Catalyzes the phosphorolysis of single-stranded polyribonucleotides processively in the 3'- to 5'-direction. The chain is Polyribonucleotide nucleotidyltransferase from Aquifex aeolicus (strain VF5).